Consider the following 225-residue polypeptide: Probable septum site-determining protein MinC (225 aa).

It belongs to the MinC family. Interacts with MinD and FtsZ.

In terms of biological role, cell division inhibitor that blocks the formation of polar Z ring septums. Rapidly oscillates between the poles of the cell to destabilize FtsZ filaments that have formed before they mature into polar Z rings. Prevents FtsZ polymerization. In Listeria monocytogenes serotype 4b (strain CLIP80459), this protein is Probable septum site-determining protein MinC.